A 90-amino-acid polypeptide reads, in one-letter code: Phosphocarrier protein HPr (90 aa).

An HPr domain is found at 1–89; that stretch reads MPAREITIIN…ELINNFFDEG (89 aa). Residue histidine 15 is the Pros-phosphohistidine intermediate of the active site.

The protein belongs to the HPr family.

It is found in the cytoplasm. General (non sugar-specific) component of the phosphoenolpyruvate-dependent sugar phosphotransferase system (sugar PTS). This major carbohydrate active-transport system catalyzes the phosphorylation of incoming sugar substrates concomitantly with their translocation across the cell membrane. The phosphoryl group from phosphoenolpyruvate (PEP) is transferred to the phosphoryl carrier protein HPr by enzyme I. Phospho-HPr then transfers it to the PTS EIIA domain. This is Phosphocarrier protein HPr (ptsH) from Pseudomonas putida (Arthrobacter siderocapsulatus).